The sequence spans 464 residues: Argininosuccinate lyase (464 aa).

It belongs to the lyase 1 family. Argininosuccinate lyase subfamily.

It is found in the cytoplasm. The catalysed reaction is 2-(N(omega)-L-arginino)succinate = fumarate + L-arginine. It participates in amino-acid biosynthesis; L-arginine biosynthesis; L-arginine from L-ornithine and carbamoyl phosphate: step 3/3. The sequence is that of Argininosuccinate lyase from Pseudomonas entomophila (strain L48).